A 326-amino-acid polypeptide reads, in one-letter code: tRNA uridine(34) hydroxylase (326 aa).

In terms of domain architecture, Rhodanese spans 123-217 (ADPEVFVVDT…YLEEVPQEES (95 aa)). C177 acts as the Cysteine persulfide intermediate in catalysis. Over residues 278–288 (QVERFREREKQ) the composition is skewed to basic and acidic residues. A disordered region spans residues 278 to 326 (QVERFREREKQVSLANQRGEQHVGGESAKQRAQRREAKLAKKAAQRKQA). Residues 317 to 326 (AKKAAQRKQA) are compositionally biased toward basic residues.

The protein belongs to the TrhO family.

The enzyme catalyses uridine(34) in tRNA + AH2 + O2 = 5-hydroxyuridine(34) in tRNA + A + H2O. Functionally, catalyzes oxygen-dependent 5-hydroxyuridine (ho5U) modification at position 34 in tRNAs. This is tRNA uridine(34) hydroxylase from Vibrio parahaemolyticus serotype O3:K6 (strain RIMD 2210633).